Consider the following 401-residue polypeptide: S-adenosylmethionine synthase (401 aa).

His-16 contacts ATP. Asp-18 contacts Mg(2+). Glu-44 lines the K(+) pocket. Residues Glu-57 and Gln-100 each contribute to the L-methionine site. Residues 100–110 form a flexible loop region; sequence QSPDIAQGVNE. ATP is bound by residues 174–176, 241–242, Asp-250, 256–257, Ala-273, and Lys-277; these read DAK, RF, and RK. Asp-250 is an L-methionine binding site. Lys-281 is a binding site for L-methionine.

The protein belongs to the AdoMet synthase family. As to quaternary structure, homotetramer; dimer of dimers. Mg(2+) serves as cofactor. Requires K(+) as cofactor.

It is found in the cytoplasm. It carries out the reaction L-methionine + ATP + H2O = S-adenosyl-L-methionine + phosphate + diphosphate. The protein operates within amino-acid biosynthesis; S-adenosyl-L-methionine biosynthesis; S-adenosyl-L-methionine from L-methionine: step 1/1. In terms of biological role, catalyzes the formation of S-adenosylmethionine (AdoMet) from methionine and ATP. The overall synthetic reaction is composed of two sequential steps, AdoMet formation and the subsequent tripolyphosphate hydrolysis which occurs prior to release of AdoMet from the enzyme. This Streptococcus equi subsp. zooepidemicus (strain MGCS10565) protein is S-adenosylmethionine synthase.